The following is a 168-amino-acid chain: Prolyl-tRNA synthetase associated domain-containing protein 1 (168 aa).

The protein belongs to the PRORSD1 family.

The sequence is that of Prolyl-tRNA synthetase associated domain-containing protein 1 (prorsd1p) from Xenopus laevis (African clawed frog).